Here is a 309-residue protein sequence, read N- to C-terminus: MPIRVPDELPAVNFLREENVFVMTTSRASGQEIRPLKVLILNLMPKKIETENQFLRLLSNSPLQVDIQLLRIDSRESRNTPAEHLNNFYCNFEDIQEQNFDGLIVTGAPLGLVEFNDVAYWPQIKQVLEWSKDHVTSTLFVCWAVQAALNILYGIPKQTRTDKLSGVYEHHILHPHALLTRGFDDSFLAPHSRYADFPAALIRDYTDLEILAETEEGDAYLFASKDKRIAFVTGHPEYDAQTLAQEYFRDVEAGLDPDVPYNYFPHNDPQNKPRASWRSHGNLLFTNWLNYYVYQITPYDLRHMNPTLD.

Catalysis depends on Cys142, which acts as the Acyl-thioester intermediate. The substrate site is built by Lys163 and Ser192. Residue His235 is the Proton acceptor of the active site. Glu237 is a catalytic residue. A substrate-binding site is contributed by Arg249.

Belongs to the MetA family. In terms of assembly, homodimer.

Its subcellular location is the cytoplasm. The enzyme catalyses L-homoserine + succinyl-CoA = O-succinyl-L-homoserine + CoA. It participates in amino-acid biosynthesis; L-methionine biosynthesis via de novo pathway; O-succinyl-L-homoserine from L-homoserine: step 1/1. Functionally, transfers a succinyl group from succinyl-CoA to L-homoserine, forming succinyl-L-homoserine. The chain is Homoserine O-succinyltransferase from Shigella sonnei (strain Ss046).